Reading from the N-terminus, the 348-residue chain is Rhodopsin (348 aa).

Position 1 is an N-acetylmethionine (M1). At 1–36 (MNGTEGPNFYVPFSNKTGVVRSPFEYPQYYLAEPWQ) the chain is on the extracellular side. Residues N2 and N15 are each glycosylated (N-linked (GlcNAc...) asparagine). The chain crosses the membrane as a helical span at residues 37 to 61 (FSMLAAYMFLLIVLGFPINFLTLYV). Residues 62 to 73 (TVQHKKLRTPLN) lie on the Cytoplasmic side of the membrane. Residues 74 to 96 (YILLNLAVADLFMVFGGFTTTLY) traverse the membrane as a helical segment. Topologically, residues 97 to 110 (TSLHGYFVFGPTGC) are extracellular. A disulfide bridge connects residues C110 and C187. The chain crosses the membrane as a helical span at residues 111–133 (NVEGFFATLGGEIALWSLVVLAI). A 'Ionic lock' involved in activated form stabilization motif is present at residues 134–136 (ERY). Over 134–152 (ERYVVVCKPMSNFRFGENH) the chain is Cytoplasmic. The helical transmembrane segment at 153 to 173 (AIMGVAFTWVMALACAAPPLA) threads the bilayer. At 174–202 (GWSRYIPEGMQCSCGIDYYTLKPEVNNES) the chain is on the extracellular side. Zn(2+) is bound at residue E201. Residues 203–224 (FVIYMFVVHFTIPMIVIFFCYG) form a helical membrane-spanning segment. Topologically, residues 225–252 (QLVFTVKEAAAQQQESATTQKAEKEVTR) are cytoplasmic. A helical transmembrane segment spans residues 253–274 (MVIIMVIAFLICWVPYASVAFY). Residues 275-286 (IFTHQGSNFGPI) are Extracellular-facing. Q279 provides a ligand contact to Zn(2+). The helical transmembrane segment at 287–308 (FMTLPAFFAKSASIYNPVIYIM) threads the bilayer. An N6-(retinylidene)lysine modification is found at K296. At 309 to 348 (MNKQFRNCMLTTICCGKNPFAEEEGATTVSKTETSQVAPA) the chain is on the cytoplasmic side. 2 S-palmitoyl cysteine lipidation sites follow: C322 and C323. Residues 330–348 (EEEGATTVSKTETSQVAPA) form an interaction with SAG region. A phosphothreonine mark is found at T335 and T336. S338 carries the phosphoserine modification. A phosphothreonine mark is found at T340 and T342. The residue at position 343 (S343) is a Phosphoserine.

This sequence belongs to the G-protein coupled receptor 1 family. Opsin subfamily. Homodimer. May form a complex composed of RHO, GRK1 and RCVRN in a Ca(2+)-dependent manner; RCVRN prevents the interaction between GRK1 and RHO. Interacts with GRK1. Interacts (phosphorylated form) with SAG. Interacts with GNAT1. Interacts with GNAT3. SAG and G-proteins compete for a common binding site. Interacts with PRCD; the interaction promotes PRCD stability. Forms a complex with ASAP1 and ARF4. Forms a complex with ASAP1, RAB11A, Rabin8/RAB3IP, ARF4 and RAB11FIP3; the complex regulates Golgi-to-cilia rhodopsin/RHO transport in photoreceptors. Post-translationally, phosphorylated on some or all of the serine and threonine residues present in the C-terminal region. In terms of processing, contains one covalently linked retinal chromophore. Upon light absorption, the covalently bound 11-cis-retinal is converted to all-trans-retinal. After hydrolysis of the Schiff base and release of the covalently bound all-trans-retinal, active rhodopsin is regenerated by binding of a fresh molecule of 11-cis-retinal.

The protein localises to the membrane. It localises to the cell projection. The protein resides in the cilium. Its subcellular location is the photoreceptor outer segment. Photoreceptor required for image-forming vision at low light intensity. Required for photoreceptor cell viability after birth. Light-induced isomerization of 11-cis to all-trans retinal triggers a conformational change that activates signaling via G-proteins. Subsequent receptor phosphorylation mediates displacement of the bound G-protein alpha subunit by the arrestin SAG and terminates signaling. The polypeptide is Rhodopsin (RHO) (Trichechus manatus (Caribbean manatee)).